A 182-amino-acid polypeptide reads, in one-letter code: Gremlin-1 (182 aa).

Positions 1 to 24 (MNCLVYALGSLFLLSGLLLPSSEG) are cleaved as a signal peptide. Residues 23 to 65 (EGKKKVSGSQGAIPPPDKGQPNDSEQGQAQPGDRVRGKGKGQA) form a disordered region. An N-linked (GlcNAc...) asparagine glycan is attached at asparagine 44. Cystine bridges form between cysteine 92–cysteine 142, cysteine 106–cysteine 156, cysteine 116–cysteine 174, and cysteine 120–cysteine 176. Residues 92–182 (CKTQPLKQTI…QCRCISIDLD (91 aa)) enclose the CTCK domain.

This sequence belongs to the DAN family.

The protein resides in the secreted. Cytokine that has an axial patterning activity. Acts like BMP antagonist in embryonic explants. Blocks the BMP2 activity. This is Gremlin-1 (grem1) from Xenopus laevis (African clawed frog).